The primary structure comprises 204 residues: Imidazoleglycerol-phosphate dehydratase (204 aa).

It belongs to the imidazoleglycerol-phosphate dehydratase family.

It localises to the cytoplasm. It carries out the reaction D-erythro-1-(imidazol-4-yl)glycerol 3-phosphate = 3-(imidazol-4-yl)-2-oxopropyl phosphate + H2O. Its pathway is amino-acid biosynthesis; L-histidine biosynthesis; L-histidine from 5-phospho-alpha-D-ribose 1-diphosphate: step 6/9. The chain is Imidazoleglycerol-phosphate dehydratase from Corynebacterium urealyticum (strain ATCC 43042 / DSM 7109).